Consider the following 444-residue polypeptide: MSKTYHFIGIKGSGMSALALMLYQMGHKVQGSDVEKYYFTQRGLEQAGITILPFDEKNLDGDMEIIAGNAFRPDNNVEIVYADQNGISYKRYHEFLGSFMRDFVSMGVAGAHGKTSTTGMLSHVLSHITDTSFLIGDGTGRGSANAKYFVFESDEYERHFMPYHPEYSIITNIDFDHPDYFTSLEDVFNAFNDYAKQITKGLFVYGEDAELRKITSDAPIYYYGFEAEGNDFVASDLLRSTTGSTFTVHFRGQNLGQFHIPTFGRHNIMNATAVIGLLYTAGFDLNLVREHLKTFSGVKRRFTEKIVNDTVIIDDFAHHPTEIIATLDAARQKYPSKEIVAVFQPHTFTRTIALLDDFAHALNQADAVYLAQIYGSAREVDHGDVKVEDLANKINKKHQVITVENVSPLLDHDNAVYVFMGAGDIQTYEYSFERLLSNLTSNVQ.

110 to 116 (GAHGKTS) lines the ATP pocket.

The protein belongs to the MurCDEF family.

It localises to the cytoplasm. The catalysed reaction is UDP-N-acetyl-alpha-D-muramate + L-alanine + ATP = UDP-N-acetyl-alpha-D-muramoyl-L-alanine + ADP + phosphate + H(+). The protein operates within cell wall biogenesis; peptidoglycan biosynthesis. Functionally, cell wall formation. This Streptococcus pneumoniae (strain ATCC 700669 / Spain 23F-1) protein is UDP-N-acetylmuramate--L-alanine ligase.